The sequence spans 375 residues: Patatin-1-Kuras 2 (375 aa).

An N-terminal signal peptide occupies residues 1 to 11; it reads MILATTSSTFA. In terms of domain architecture, PNPLA spans 20 to 218; that stretch reads LSIDGGGIKG…TVADPALLSV (199 aa). The GXGXXG motif lies at 24 to 29; sequence GGGIKG. The GXSXG signature appears at 63 to 67; sequence GTSTG. Catalysis depends on serine 65, which acts as the Nucleophile. Asparagine 103 carries N-linked (GlcNAc...) asparagine glycosylation. Catalysis depends on aspartate 204, which acts as the Proton acceptor. The DGA/G motif lies at 204–206; that stretch reads DGA. The stretch at 349-373 forms a coiled coil; the sequence is ETYEEALKRFAKLLSDRKKLRANKA.

Belongs to the patatin family. Tuber.

It localises to the vacuole. Its function is as follows. Probable lipolytic acyl hydrolase (LAH), an activity which is thought to be involved in the response of tubers to pathogens. The polypeptide is Patatin-1-Kuras 2 (pat1-k2) (Solanum tuberosum (Potato)).